Consider the following 558-residue polypeptide: EF-hand and coiled-coil domain-containing protein 1 (558 aa).

The EF-hand domain occupies 43 to 78; sequence GLDQYLQEVFHHLDCRGAGRLPRADFRALCAVLGLN. Residues 161–170 are compositionally biased toward basic residues; that stretch reads LRRPRRRRRP. 2 disordered regions span residues 161-183 and 304-395; these read LRRP…YGER and RSEG…QPSG. Coiled coils occupy residues 179-304 and 453-495; these read AYGE…RGYR and VEAE…LNIS.

This is EF-hand and coiled-coil domain-containing protein 1 (Efcc1) from Mus musculus (Mouse).